The primary structure comprises 83 residues: Antitoxin ParD1 (83 aa).

Residues 33–60 (IRSALRLLEDRETQLRALREALEAGERS) are a coiled coil. The segment at 54–83 (LEAGERSGSSTPFDFDGFLGRKRADASRGR) is disordered.

It belongs to the ParD antitoxin family.

In terms of biological role, antitoxin component of a type II toxin-antitoxin (TA) system. In Mycobacterium tuberculosis (strain CDC 1551 / Oshkosh), this protein is Antitoxin ParD1 (parD1).